We begin with the raw amino-acid sequence, 129 residues long: Large ribosomal subunit protein uL22 (129 aa).

Belongs to the universal ribosomal protein uL22 family. In terms of assembly, part of the 50S ribosomal subunit.

This protein binds specifically to 23S rRNA; its binding is stimulated by other ribosomal proteins, e.g. L4, L17, and L20. It is important during the early stages of 50S assembly. It makes multiple contacts with different domains of the 23S rRNA in the assembled 50S subunit and ribosome. Functionally, the globular domain of the protein is located near the polypeptide exit tunnel on the outside of the subunit, while an extended beta-hairpin is found that lines the wall of the exit tunnel in the center of the 70S ribosome. This is Large ribosomal subunit protein uL22 from Rhizobium etli (strain ATCC 51251 / DSM 11541 / JCM 21823 / NBRC 15573 / CFN 42).